The chain runs to 311 residues: Homoserine kinase (311 aa).

88-98 (PEGLGLGSSGA) serves as a coordination point for ATP.

Belongs to the GHMP kinase family. Homoserine kinase subfamily.

It is found in the cytoplasm. The enzyme catalyses L-homoserine + ATP = O-phospho-L-homoserine + ADP + H(+). The protein operates within amino-acid biosynthesis; L-threonine biosynthesis; L-threonine from L-aspartate: step 4/5. Its function is as follows. Catalyzes the ATP-dependent phosphorylation of L-homoserine to L-homoserine phosphate. The polypeptide is Homoserine kinase (Saccharolobus islandicus (strain Y.N.15.51 / Yellowstone #2) (Sulfolobus islandicus)).